Here is a 519-residue protein sequence, read N- to C-terminus: Demethylepipodophyllotoxin synthase (519 aa).

The chain crosses the membrane as a helical span at residues 6-26; it reads CLETLLLGFFVLLPCFFYFVW. Residue Cys458 coordinates heme.

It belongs to the cytochrome P450 family. The cofactor is heme. In terms of tissue distribution, rhizome-specific expression.

It is found in the membrane. The catalysed reaction is (-)-4'-desmethyl-deoxypodophyllotoxin + reduced [NADPH--hemoprotein reductase] + O2 = 4'-demethylepipodophyllotoxin + oxidized [NADPH--hemoprotein reductase] + H2O + H(+). The protein operates within aromatic compound metabolism; phenylpropanoid biosynthesis. Functionally, cytochrome P450 involved in the biosynthesis of etoposide, a chemotherapeutic compound of the topoisomerase inhibitor family. Catalyzes the hydroxylation of deoxypodophyllotoxin to form epipodophyllotoxin. The protein is Demethylepipodophyllotoxin synthase of Sinopodophyllum hexandrum (Himalayan may apple).